The chain runs to 60 residues: MDAKLLEILVCPICKGPLHYKKNEQELICKPCRLAYPIQDGIPVMLEDEARKLPAEEEVE.

It belongs to the UPF0434 family.

The sequence is that of UPF0434 protein Mfla_2088 from Methylobacillus flagellatus (strain ATCC 51484 / DSM 6875 / VKM B-1610 / KT).